Consider the following 652-residue polypeptide: Sodium-dependent phosphate transporter 1-A (652 aa).

The Cytoplasmic segment spans residues 1 to 25; that stretch reads MESTTLASLAAVSVLAAGAQTDMSD. Residues 26–46 traverse the membrane as a helical segment; that stretch reads VLWLLILGFVIAFILAFSVGA. The Extracellular portion of the chain corresponds to 47-66; the sequence is NDVANSFGTAVGSGVVTLRQ. Residues 67-87 traverse the membrane as a helical segment; that stretch reads ACILATIFETVGAMLLGAKVS. At 88–104 the chain is on the cytoplasmic side; sequence ETIRSGIIDVHMYNGSE. Residues 105-125 traverse the membrane as a helical segment; that stretch reads AVLMAGSISAMFGSAVWQLAA. Over 126-162 the chain is Extracellular; the sequence is SFLKLPISGTHCIVGATIGFSMVARGHQGVKWLELLR. The chain crosses the membrane as a helical span at residues 163-183; that stretch reads IVASWFLSPLLSGIMSAVLFY. The Cytoplasmic segment spans residues 184-201; sequence FVRKFILNKDDPVPNGLR. Residues 202–222 form a helical membrane-spanning segment; the sequence is ALPVFYAVTMGINLFSIMFTG. Topologically, residues 223–234 are extracellular; it reads APMLGFDRIPWW. A helical membrane pass occupies residues 235–255; that stretch reads GTLLISLGCAILTALVVWFIV. The Cytoplasmic portion of the chain corresponds to 256-482; sequence CPRLKKKMQS…IDELEIDKPE (227 aa). Residues 278–308 are disordered; that stretch reads TQLVEKKPSSNGLMDHHPGPPRNYSPVPQTP. The span at 281 to 295 shows a compositional bias: basic and acidic residues; that stretch reads VEKKPSSNGLMDHHP. Positions 297–308 are enriched in pro residues; it reads PPRNYSPVPQTP. Residues 483-503 traverse the membrane as a helical segment; that stretch reads VSTLFQFLQILTACFGSFAHG. Residues 504–531 are Extracellular-facing; sequence GNDVSNAIGPLVALWLIYDSASVAPSAP. A helical transmembrane segment spans residues 532 to 552; the sequence is TPIWLLLYGGVGICTGLWIWG. Residues 553–571 lie on the Cytoplasmic side of the membrane; that stretch reads RRVIQTMGKDLTPITPSSG. A helical transmembrane segment spans residues 572–592; that stretch reads FSIELASAITVVVASNIGLPV. The Extracellular segment spans residues 593-621; sequence STTHCKVGSVVSVGWLRSRKAVDWHLFRN. A helical transmembrane segment spans residues 622–642; sequence IFIAWFVTVPISGLISAAIMA. The Cytoplasmic portion of the chain corresponds to 643 to 652; the sequence is LFYYVILPLT.

Belongs to the inorganic phosphate transporter (PiT) (TC 2.A.20) family.

It localises to the membrane. Sodium-phosphate symporter which plays a fundamental housekeeping role in phosphate transport. The polypeptide is Sodium-dependent phosphate transporter 1-A (slc20a1a) (Danio rerio (Zebrafish)).